Here is a 350-residue protein sequence, read N- to C-terminus: Ribosome production factor 2 homolog (350 aa).

A Brix domain is found at 28–266 (KTCLFLRGTT…LGRMREPDPA (239 aa)). The span at 192 to 202 (PTSSTSTNNDG) shows a compositional bias: polar residues. 2 disordered regions span residues 192–219 (PTSS…SIDP) and 301–350 (MGKT…KVKG).

It belongs to the RPF2 family. As to quaternary structure, component of a hexameric 5S RNP precursor complex, composed of 5S RNA, RRS1, RPF2, RPL5, RPL11 and SYO1; this complex acts as a precursor for ribosome assembly.

It is found in the nucleus. Its subcellular location is the nucleolus. Involved in ribosomal large subunit assembly. The chain is Ribosome production factor 2 homolog from Chaetomium thermophilum (strain DSM 1495 / CBS 144.50 / IMI 039719) (Thermochaetoides thermophila).